The primary structure comprises 159 residues: LOB domain-containing protein 25 (159 aa).

The 102-residue stretch at 38-139 folds into the LOB domain; it reads SPCAACKFLR…RELEETNADL (102 aa).

Belongs to the LOB domain-containing protein family. In terms of tissue distribution, expressed in young shoots, roots, stems, leaves and flowers.

In Arabidopsis thaliana (Mouse-ear cress), this protein is LOB domain-containing protein 25 (LBD25).